Here is a 508-residue protein sequence, read N- to C-terminus: tRNA(Ile2) 2-agmatinylcytidine synthetase TiaS (508 aa).

Positions 367–427 form a DNA-binding region, OB; sequence ITGGHVLIEL…YQLNIEKINV (61 aa).

It belongs to the TiaS family.

The protein resides in the cytoplasm. The enzyme catalyses cytidine(34) in tRNA(Ile2) + agmatine + ATP + H2O = 2-agmatinylcytidine(34) in tRNA(Ile2) + AMP + 2 phosphate + 2 H(+). Its function is as follows. ATP-dependent agmatine transferase that catalyzes the formation of 2-agmatinylcytidine (agm2C) at the wobble position (C34) of tRNA(Ile2), converting the codon specificity from AUG to AUA. In Methanococcus voltae (strain ATCC BAA-1334 / A3), this protein is tRNA(Ile2) 2-agmatinylcytidine synthetase TiaS.